Here is a 151-residue protein sequence, read N- to C-terminus: Putative UPF0320 protein YFL063W (151 aa).

The protein belongs to the UPF0320 family.

The polypeptide is Putative UPF0320 protein YFL063W (Saccharomyces cerevisiae (strain ATCC 204508 / S288c) (Baker's yeast)).